Consider the following 381-residue polypeptide: Estradiol 17-beta-dehydrogenase 2 (381 aa).

The chain crosses the membrane as a helical; Signal-anchor for type II membrane protein span at residues 4 to 24; that stretch reads FASESAWLCLAAAAVLGGTLL. An NAD(+)-binding site is contributed by 83–112; sequence QKAVLVTGADSGFGHGLAKHLDKLGFTVFA. Ser220 is a substrate binding site. Catalysis depends on Tyr233, which acts as the Proton acceptor.

The protein belongs to the short-chain dehydrogenases/reductases (SDR) family. Homodimer.

It localises to the endoplasmic reticulum membrane. The catalysed reaction is 17beta-estradiol + NAD(+) = estrone + NADH + H(+). The enzyme catalyses testosterone + NAD(+) = androst-4-ene-3,17-dione + NADH + H(+). It catalyses the reaction 17beta-hydroxy-5alpha-androstan-3-one + NAD(+) = 5alpha-androstan-3,17-dione + NADH + H(+). It carries out the reaction (20S)-hydroxypregn-4-en-3-one + NAD(+) = progesterone + NADH + H(+). In terms of biological role, catalyzes the NAD-dependent oxidation of highly active 17beta-hydroxysteroids, such as estradiol (E2), testosterone (T), and dihydrotestosterone (DHT), to their less active forms and thus regulates the biological potency of these steroids. Oxidizes estradiol to estrone, testosterone to androstenedione, and dihydrotestosterone to 5alpha-androstan-3,17-dione. Also has 20-alpha-HSD activity. The chain is Estradiol 17-beta-dehydrogenase 2 (Hsd17b2) from Mus musculus (Mouse).